We begin with the raw amino-acid sequence, 562 residues long: Calmodulin-binding protein 60 F (562 aa).

Positions 1 to 22 (MENSMNNRGHGHNQEHADNLPE) are disordered. A calmodulin-binding region spans residues 5–84 (MNNRGHGHNQ…STSRSTEPNK (80 aa)). Residues 12 to 22 (HNQEHADNLPE) show a composition bias toward basic and acidic residues. A DNA-binding region spans residues 154–273 (EDDKDWTREH…ALHKKLLKSN (120 aa)).

It belongs to the plant ACBP60 protein family. In terms of assembly, interacts with calmodulin (CaM).

It is found in the nucleus. Functionally, transcription activator that binds DNA in a sequence-specific manner, likely 5'-GAAATTTTGG-3', to promote the expression of target genes. The protein is Calmodulin-binding protein 60 F of Arabidopsis thaliana (Mouse-ear cress).